Consider the following 160-residue polypeptide: MAFFVKNMISNQVKNLGFGGGSEEKKEEGGTSDPAAAKGMTREEYEEYQKQMIEEKMERDAAFTQKKAERACLRVHLRDKYRLPKSEMDETQIQLAGDDVDLPEDLRKMVDEDQDEEEEKDSILGQLQNLQNMDLDTIKEKAQATFTEIKQSAEQKCSVM.

The segment at 14-44 (KNLGFGGGSEEKKEEGGTSDPAAAKGMTREE) is disordered. Cysteine 157 carries the post-translational modification Cysteine methyl ester. Cysteine 157 carries S-farnesyl cysteine lipidation. A propeptide spans 158–160 (SVM) (removed in mature form).

This sequence belongs to the complexin/synaphin family. In terms of assembly, weakly binds to the SNARE core complex containing SNAP25, VAMP2 and STX1A. In terms of processing, farnesylation mediates presynaptic targeting and is important for function in neurotransmitter release. In terms of tissue distribution, present specifically in the retina (at protein level). Expressed in the outer nuclear layer of the retina (at protein level). Strongly expressed at rod photoreceptor ribbon synapses (at protein level). Not expressed at conventional amacrine cell synapses, nor at cone photoreceptor ribbon synapses (at protein level). Weakly expressed at cone photoreceptor synaptic terminals (at protein level). Not expressed in the brain (at protein level).

Its subcellular location is the synapse. The protein localises to the cell membrane. Complexin that regulates SNARE protein complex-mediated synaptic vesicle fusion. Required for the maintenance of synaptic ultrastructure in the adult retina. Positively regulates synaptic transmission through synaptic vesicle availability and exocytosis of neurotransmitters at photoreceptor ribbon synapses in the retina. Suppresses tonic photoreceptor activity and baseline 'noise' by suppression of Ca(2+) vesicle tonic release and the facilitation of evoked synchronous and asynchronous Ca(2+) vesicle release. The protein is Complexin-4 (Cplx4) of Mus musculus (Mouse).